The primary structure comprises 221 residues: 2-amino-5-formylamino-6-ribosylaminopyrimidin-4(3H)-one 5'-monophosphate deformylase (221 aa).

Residues E29, H31, D40, and H108 each coordinate Fe cation.

The protein belongs to the creatininase superfamily. FAPy deformylase family. In terms of assembly, homodimer. The cofactor is Fe(2+). Zn(2+) is required as a cofactor.

The enzyme catalyses 2-amino-5-formylamino-6-(5-phospho-D-ribosylamino)pyrimidin-4(3H)-one + H2O = 2,5-diamino-6-(1-D-ribosylamino)pyrimidin-4(3H)-one 5'-phosphate + formate + H(+). Its pathway is cofactor biosynthesis; coenzyme F420 biosynthesis. The protein operates within cofactor biosynthesis; riboflavin biosynthesis. Catalyzes the hydrolysis of the formamide of 2-amino-5-formylamino-6-ribosylamino-4(3H)-pyrimidinone 5'-monophosphate (FAPy) to form 2,5-diamino-6-ribosylamino-4(3H)-pyrimidinone 5'-phosphate (APy). The chain is 2-amino-5-formylamino-6-ribosylaminopyrimidin-4(3H)-one 5'-monophosphate deformylase from Methanococcus maripaludis (strain DSM 14266 / JCM 13030 / NBRC 101832 / S2 / LL).